The primary structure comprises 717 residues: Polyribonucleotide nucleotidyltransferase (717 aa).

Mg(2+) contacts are provided by Asp-487 and Asp-493. The region spanning 554–613 is the KH domain; it reads PRITVINVPKDKIRDVIGTGGKVIREIVEYSGCKIDIEDDGTIKIAATSDEQAQKAIDRI. The S1 motif domain occupies 623–691; the sequence is GQIYTGKVVK…DRGKVKLSMR (69 aa).

The protein belongs to the polyribonucleotide nucleotidyltransferase family. It depends on Mg(2+) as a cofactor.

The protein resides in the cytoplasm. The enzyme catalyses RNA(n+1) + phosphate = RNA(n) + a ribonucleoside 5'-diphosphate. In terms of biological role, involved in mRNA degradation. Catalyzes the phosphorolysis of single-stranded polyribonucleotides processively in the 3'- to 5'-direction. In Acidiphilium cryptum (strain JF-5), this protein is Polyribonucleotide nucleotidyltransferase.